The primary structure comprises 242 residues: UPF0246 protein SP70585_1589 (242 aa).

It belongs to the UPF0246 family.

This is UPF0246 protein SP70585_1589 from Streptococcus pneumoniae (strain 70585).